Reading from the N-terminus, the 455-residue chain is Probable circularly permuted 1,3-beta-glucanase TOS1 (455 aa).

Residues 1-23 (MLQKLSMTALVGLFSSVVSLVNA) form the signal peptide. The segment at 158-221 (TADSTNTVVG…SSSSSSNTNG (64 aa)) is disordered. The span at 172–189 (SSYTKDSTVLSSSAQAVE) shows a compositional bias: polar residues. Positions 190-219 (TSESQSSISSSKTTSSAAAASSSSSSSSNT) are enriched in low complexity. Asparagine 236 carries N-linked (GlcNAc...) asparagine glycosylation. The short motif at 372–377 (EMDLFE) is the ExDxxE motif element. An N-linked (GlcNAc...) asparagine glycan is attached at asparagine 417.

This sequence belongs to the PGA52 family.

Its subcellular location is the secreted. The protein resides in the cell wall. The enzyme catalyses Hydrolysis of (1-&gt;3)-beta-D-glucosidic linkages in (1-&gt;3)-beta-D-glucans.. Functionally, probable circularly permuted 1,3-beta-glucanase involved in cell wall modification through beta-1,3-glucan network alterations such as increased branching or remodeling. This is Probable circularly permuted 1,3-beta-glucanase TOS1 from Saccharomyces cerevisiae (strain ATCC 204508 / S288c) (Baker's yeast).